The following is a 319-amino-acid chain: Lipooligosaccharide heptosyltransferase 2 (319 aa).

The protein belongs to the glycosyltransferase 9 family.

The catalysed reaction is an L-alpha-D-Hep-(1-&gt;5)-[alpha-Kdo-(2-&gt;4)]-alpha-Kdo-(2-&gt;6)-lipid A + ADP-L-glycero-beta-D-manno-heptose = an L-alpha-D-Hep-(1-&gt;3)-L-alpha-D-Hep-(1-&gt;5)-[alpha-Kdo-(2-&gt;4)]-alpha-Kdo-(2-&gt;6)-lipid A + ADP + H(+). Its pathway is bacterial outer membrane biogenesis; LOS core biosynthesis. Functionally, glycosyltransferase involved in the biosynthesis of the core oligosaccharide region of lipooligosaccharide (LOS). Catalyzes the addition of the second heptose unit to the heptosyl-Kdo2-lipid A module. The chain is Lipooligosaccharide heptosyltransferase 2 from Campylobacter jejuni subsp. jejuni serotype O:2 (strain ATCC 700819 / NCTC 11168).